A 479-amino-acid polypeptide reads, in one-letter code: Sulfate adenylyltransferase subunit 1 (479 aa).

The tr-type G domain maps to 25–239 (KSLLRFLTCG…EVLETVDIQR (215 aa)). The G1 stretch occupies residues 34–41 (GSVDDGKS). 34 to 41 (GSVDDGKS) contributes to the GTP binding site. Positions 92–96 (GITID) are G2. The G3 stretch occupies residues 113–116 (DTPG). Residues 113–117 (DTPGH) and 168–171 (NKMD) contribute to the GTP site. Residues 168–171 (NKMD) are G4. Positions 206–208 (SAL) are G5.

Belongs to the TRAFAC class translation factor GTPase superfamily. Classic translation factor GTPase family. CysN/NodQ subfamily. Heterodimer composed of CysD, the smaller subunit, and CysN.

The enzyme catalyses sulfate + ATP + H(+) = adenosine 5'-phosphosulfate + diphosphate. It participates in sulfur metabolism; hydrogen sulfide biosynthesis; sulfite from sulfate: step 1/3. With CysD forms the ATP sulfurylase (ATPS) that catalyzes the adenylation of sulfate producing adenosine 5'-phosphosulfate (APS) and diphosphate, the first enzymatic step in sulfur assimilation pathway. APS synthesis involves the formation of a high-energy phosphoric-sulfuric acid anhydride bond driven by GTP hydrolysis by CysN coupled to ATP hydrolysis by CysD. The sequence is that of Sulfate adenylyltransferase subunit 1 from Salmonella heidelberg (strain SL476).